A 499-amino-acid polypeptide reads, in one-letter code: Protein adenylyltransferase Fic (499 aa).

A helical transmembrane segment spans residues 38-58 (FHYFVIFASGSLFSGLMFGLL). TPR repeat units lie at residues 126–159 (ALSSLKVAIEMKTMGKDDKAARLFQHALALSPKH) and 160–194 (PEILTKYGEFLEHNQQDVVRADHYYYQALTVNPSH). The Inhibitory (S/T)XXXE(G/N) motif motif lies at 251 to 256 (SVGIEG). ATP is bound by residues E255 and 337-340 (VGGH). A Fido domain is found at 306–441 (ITLKDILEIH…IRPFVRFIAD (136 aa)). H384 is an active-site residue. ATP-binding positions include 388–395 (DGNGRTSR), 420–421 (YY), and N428.

This sequence belongs to the fic family. Homodimer.

It is found in the membrane. The enzyme catalyses L-tyrosyl-[protein] + ATP = O-(5'-adenylyl)-L-tyrosyl-[protein] + diphosphate. It catalyses the reaction L-threonyl-[protein] + ATP = 3-O-(5'-adenylyl)-L-threonyl-[protein] + diphosphate. It carries out the reaction 3-O-(5'-adenylyl)-L-threonyl-[protein] + H2O = L-threonyl-[protein] + AMP + H(+). With respect to regulation, the side chain of Glu-255 determines which of the two opposing activities (AMPylase or de-AMPylase) will take place. In response to endoplasmic reticulum stress, mediates de-AMPylase activity. Adenylyltransferase activity is inhibited by the inhibitory helix present at the N-terminus: Glu-255 binds ATP and competes with ATP-binding at Arg-395, thereby preventing adenylyltransferase activity. In unstressed cells, disengagement of Glu-255 promotes adenylyltransferase activity. Activation dissociates ATP-binding from Glu-255, allowing ordered binding of the entire ATP moiety with the alpha-phosphate in an orientation that is productive for accepting an incoming target hydroxyl side chain. Functionally, protein that can both mediate the addition of adenosine 5'-monophosphate (AMP) to specific residues of target proteins (AMPylation), and the removal of the same modification from target proteins (de-AMPylation), depending on the context. The side chain of Glu-255 determines which of the two opposing activities (AMPylase or de-AMPylase) will take place. Acts as a key regulator of the unfolded protein response (UPR) by mediating AMPylation or de-AMPylation of Hsc70-3/BiP. In unstressed cells, acts as an adenylyltransferase by mediating AMPylation of Hsc70-3/BiP at 'Thr-518', thereby inactivating it. In response to endoplasmic reticulum stress, acts as a phosphodiesterase by mediating removal of ATP (de-AMPylation) from Hsc70-3/BiP at 'Thr-518', leading to restore HSPA5/BiP activity. This is Protein adenylyltransferase Fic from Aedes aegypti (Yellowfever mosquito).